Reading from the N-terminus, the 325-residue chain is 5-dehydro-2-deoxygluconokinase (325 aa).

This sequence belongs to the carbohydrate kinase PfkB family.

It catalyses the reaction 5-dehydro-2-deoxy-D-gluconate + ATP = 6-phospho-5-dehydro-2-deoxy-D-gluconate + ADP + H(+). Its pathway is polyol metabolism; myo-inositol degradation into acetyl-CoA; acetyl-CoA from myo-inositol: step 5/7. Its function is as follows. Catalyzes the phosphorylation of 5-dehydro-2-deoxy-D-gluconate (2-deoxy-5-keto-D-gluconate or DKG) to 6-phospho-5-dehydro-2-deoxy-D-gluconate (DKGP). In Listeria monocytogenes serotype 4b (strain CLIP80459), this protein is 5-dehydro-2-deoxygluconokinase.